Consider the following 20-residue polypeptide: Cytochrome c oxidase subunit 6A1, mitochondrial (20 aa).

Belongs to the cytochrome c oxidase subunit 6A family. In terms of assembly, component of the cytochrome c oxidase (complex IV, CIV), a multisubunit enzyme composed of 14 subunits. The complex is composed of a catalytic core of 3 subunits MT-CO1, MT-CO2 and MT-CO3, encoded in the mitochondrial DNA, and 11 supernumerary subunits COX4I, COX5A, COX5B, COX6A, COX6B, COX6C, COX7A, COX7B, COX7C, COX8 and NDUFA4, which are encoded in the nuclear genome. The complex exists as a monomer or a dimer and forms supercomplexes (SCs) in the inner mitochondrial membrane with NADH-ubiquinone oxidoreductase (complex I, CI) and ubiquinol-cytochrome c oxidoreductase (cytochrome b-c1 complex, complex III, CIII), resulting in different assemblies (supercomplex SCI(1)III(2)IV(1) and megacomplex MCI(2)III(2)IV(2)). Liver specific isoform.

The protein resides in the mitochondrion inner membrane. The protein operates within energy metabolism; oxidative phosphorylation. Functionally, component of the cytochrome c oxidase, the last enzyme in the mitochondrial electron transport chain which drives oxidative phosphorylation. The respiratory chain contains 3 multisubunit complexes succinate dehydrogenase (complex II, CII), ubiquinol-cytochrome c oxidoreductase (cytochrome b-c1 complex, complex III, CIII) and cytochrome c oxidase (complex IV, CIV), that cooperate to transfer electrons derived from NADH and succinate to molecular oxygen, creating an electrochemical gradient over the inner membrane that drives transmembrane transport and the ATP synthase. Cytochrome c oxidase is the component of the respiratory chain that catalyzes the reduction of oxygen to water. Electrons originating from reduced cytochrome c in the intermembrane space (IMS) are transferred via the dinuclear copper A center (CU(A)) of subunit 2 and heme A of subunit 1 to the active site in subunit 1, a binuclear center (BNC) formed by heme A3 and copper B (CU(B)). The BNC reduces molecular oxygen to 2 water molecules unsing 4 electrons from cytochrome c in the IMS and 4 protons from the mitochondrial matrix. The protein is Cytochrome c oxidase subunit 6A1, mitochondrial (COX6A1) of Ovis aries (Sheep).